We begin with the raw amino-acid sequence, 236 residues long: tRNA1(Val) (adenine(37)-N6)-methyltransferase (236 aa).

It belongs to the methyltransferase superfamily. tRNA (adenine-N(6)-)-methyltransferase family.

Its subcellular location is the cytoplasm. The catalysed reaction is adenosine(37) in tRNA1(Val) + S-adenosyl-L-methionine = N(6)-methyladenosine(37) in tRNA1(Val) + S-adenosyl-L-homocysteine + H(+). In terms of biological role, specifically methylates the adenine in position 37 of tRNA(1)(Val) (anticodon cmo5UAC). The polypeptide is tRNA1(Val) (adenine(37)-N6)-methyltransferase (Actinobacillus succinogenes (strain ATCC 55618 / DSM 22257 / CCUG 43843 / 130Z)).